We begin with the raw amino-acid sequence, 279 residues long: 4-deoxy-L-threo-5-hexosulose-uronate ketol-isomerase (279 aa).

Zn(2+) contacts are provided by H197, H199, E204, and H246.

It belongs to the KduI family. The cofactor is Zn(2+).

The enzyme catalyses 5-dehydro-4-deoxy-D-glucuronate = 3-deoxy-D-glycero-2,5-hexodiulosonate. It functions in the pathway glycan metabolism; pectin degradation; 2-dehydro-3-deoxy-D-gluconate from pectin: step 4/5. In terms of biological role, catalyzes the isomerization of 5-dehydro-4-deoxy-D-glucuronate to 3-deoxy-D-glycero-2,5-hexodiulosonate. The polypeptide is 4-deoxy-L-threo-5-hexosulose-uronate ketol-isomerase (Kineococcus radiotolerans (strain ATCC BAA-149 / DSM 14245 / SRS30216)).